A 689-amino-acid chain; its full sequence is Methionine--tRNA ligase (689 aa).

The 'HIGH' region motif lies at P15–H25. C146, C149, C159, and C162 together coordinate Zn(2+). The short motif at K332–S336 is the 'KMSKS' region element. K335 lines the ATP pocket. Residues D588–K689 enclose the tRNA-binding domain.

Belongs to the class-I aminoacyl-tRNA synthetase family. MetG type 1 subfamily. Homodimer. Zn(2+) serves as cofactor.

It localises to the cytoplasm. The enzyme catalyses tRNA(Met) + L-methionine + ATP = L-methionyl-tRNA(Met) + AMP + diphosphate. In terms of biological role, is required not only for elongation of protein synthesis but also for the initiation of all mRNA translation through initiator tRNA(fMet) aminoacylation. This chain is Methionine--tRNA ligase, found in Shewanella sp. (strain W3-18-1).